The chain runs to 522 residues: MTTITEELIARLKQGITSGVDLQPRQVNVGTVIAVGDGVARLSGLDQVVASEIVEFPPKAGRNESIYGIALNLEQDSVAAIILGDDETIEEGDMVTSTGRVISVPVGQGLLGRVVNPLGQPIDGKGPIVYEKTRPIERIAPGVITRKSVDTPVQTGIIAIDALIPIGRGQRELIIGDRQTGKTAVAIDTILNQKGQGMVCIYVAIGQRRAQVAQVVGTLERFGAMEYTIVVSATASESAALQYIAPYAGCAMGEEIMENGVMLNGQLVKDALIVYDDLSKHAVAYRQVSLLLRRPPGREAYPGDVFYLHSRLLERAARLNEEYGGGSLTALPVIETQANDVSAYIPTNVISITDGQIYLESDLFNAGQRPALNVGISVSRVGGAAQTRAMRAVAGKLKGELAQFRDLAAFAQFASDLDATTKAQIERGQRLQELLKQPQYQPLPVEDQVAVLYAATNNYLDDVPVPLITKWRDDFLAFLRTAHPEVRKLIYDNRLDRKFPTPEVKEALEAAIKEFKATSNYS.

176–183 serves as a coordination point for ATP; the sequence is GDRQTGKT.

Belongs to the ATPase alpha/beta chains family. In terms of assembly, F-type ATPases have 2 components, CF(1) - the catalytic core - and CF(0) - the membrane proton channel. CF(1) has five subunits: alpha(3), beta(3), gamma(1), delta(1), epsilon(1). CF(0) has four main subunits: a(1), b(1), b'(1) and c(9-12).

Its subcellular location is the cell membrane. The catalysed reaction is ATP + H2O + 4 H(+)(in) = ADP + phosphate + 5 H(+)(out). Functionally, produces ATP from ADP in the presence of a proton gradient across the membrane. The alpha chain is a regulatory subunit. In Chloroflexus aurantiacus (strain ATCC 29366 / DSM 635 / J-10-fl), this protein is ATP synthase subunit alpha.